The following is a 319-amino-acid chain: 12-(S)-hydroxy-5,8,10,14-eicosatetraenoic acid receptor (319 aa).

The Extracellular portion of the chain corresponds to 1-16 (MPFPNCSAPSTVVATA). N-linked (GlcNAc...) asparagine glycosylation is present at asparagine 5. A helical transmembrane segment spans residues 17 to 37 (VGVLLGLECGLGLLGNAVALW). The Cytoplasmic portion of the chain corresponds to 38 to 52 (TFLFRVRVWKPYAVY). The helical transmembrane segment at 53–73 (LLNLALADLLLAACLPFLAAF) threads the bilayer. Residues 74–91 (YLSLQAWHLGRVGCWALH) are Extracellular-facing. A helical transmembrane segment spans residues 92-110 (FLLDLSRSVGMAFLAAVAL). Topologically, residues 111–131 (DRYLRVVHPRLKVNLLSPQAA) are cytoplasmic. Residues 132–152 (LGVSGLVWLLMVALTCPGLLI) form a helical membrane-spanning segment. At 153–180 (SEAAQNSTRCHSFYSRADGSFSIIWQEA) the chain is on the extracellular side. Residues 181-201 (LSCLQFVLPFGLIVFCNAGII) form a helical membrane-spanning segment. Residues 202-219 (RALQKRLREPEKQPKLQR) are Cytoplasmic-facing. The helical transmembrane segment at 220 to 240 (AQALVTLVVVLFALCFLPCFL) threads the bilayer. Residues 241 to 265 (ARVLMHIFQNLGSCRALCAVAHTSD) are Extracellular-facing. A helical membrane pass occupies residues 266 to 284 (VTGSLTYLHSVLNPVVYCF). At 285–319 (SSPTFRSSYRRVFHTLRGKGQAAEPPDFNPRDSYS) the chain is on the cytoplasmic side.

The protein belongs to the G-protein coupled receptor 1 family. In terms of assembly, interacts with KRAS; in a farnesylation-dependent manner.

Its subcellular location is the cell membrane. In terms of biological role, high-affinity receptor for 12-(S)-hydroxy-5,8,10,14-eicosatetraenoic acid (12-S-HETE), with much lower affinities for other HETE isomers. 12-S-HETE is a eicosanoid, a 12-lipoxygenase (ALOX12) metabolite of arachidonic acid, involved in many physiologic and pathologic processes. 12-S-HETE-binding leads to activation of ERK1/2 (MAPK3/MAPK1), MEK, and NF-kappa-B pathways leading to cell growth. Plays a crucial role for proliferation, survival and macropinocytosis of KRAS-dependent cancer cells by mediating the translocation of KRAS from the endoplasmic reticulum to the plasma membrane (PM) and its association with the PM. Contributes to enhanced immune responses by inducing dendrite protrusion of small intestinal CX3CR1(+) phagocytes for the uptake of luminal antigens. Acts also as a key receptor for 12-(S)-HETE-mediated liver ischemia reperfusion injury. Proton-sensing G protein-coupled receptor. The sequence is that of 12-(S)-hydroxy-5,8,10,14-eicosatetraenoic acid receptor (GPR31) from Homo sapiens (Human).